The chain runs to 1342 residues: DNA-directed RNA polymerase subunit beta (1342 aa).

This sequence belongs to the RNA polymerase beta chain family. As to quaternary structure, the RNAP catalytic core consists of 2 alpha, 1 beta, 1 beta' and 1 omega subunit. When a sigma factor is associated with the core the holoenzyme is formed, which can initiate transcription.

The enzyme catalyses RNA(n) + a ribonucleoside 5'-triphosphate = RNA(n+1) + diphosphate. Its function is as follows. DNA-dependent RNA polymerase catalyzes the transcription of DNA into RNA using the four ribonucleoside triphosphates as substrates. This chain is DNA-directed RNA polymerase subunit beta, found in Aeromonas salmonicida (strain A449).